The chain runs to 419 residues: L-rhamnose isomerase (419 aa).

Residues His262, Asp294, and Asp296 each coordinate Mn(2+).

This sequence belongs to the rhamnose isomerase family. As to quaternary structure, homotetramer. Mn(2+) is required as a cofactor.

Its subcellular location is the cytoplasm. It carries out the reaction L-rhamnopyranose = L-rhamnulose. Its pathway is carbohydrate degradation; L-rhamnose degradation; glycerone phosphate from L-rhamnose: step 1/3. Functionally, catalyzes the interconversion of L-rhamnose and L-rhamnulose. This chain is L-rhamnose isomerase, found in Enterobacter sp. (strain 638).